We begin with the raw amino-acid sequence, 676 residues long: UvrABC system protein B (676 aa).

One can recognise a Helicase ATP-binding domain in the interval 35–192 (QGVADGLMYQ…ARLVAMQYTR (158 aa)). 48 to 55 (GVTGSGKT) contributes to the ATP binding site. The Beta-hairpin motif lies at 101–124 (YYDYYQPEAYVPTRDLFIEKDSSV). Residues 439 to 605 (QVDDLLGEIR…GVNKAVRELI (167 aa)) enclose the Helicase C-terminal domain. The 36-residue stretch at 634-669 (AREIKRLEKLMMDHARNLEFEQAAAARDALTALKNR) folds into the UVR domain.

It belongs to the UvrB family. As to quaternary structure, forms a heterotetramer with UvrA during the search for lesions. Interacts with UvrC in an incision complex.

The protein localises to the cytoplasm. Its function is as follows. The UvrABC repair system catalyzes the recognition and processing of DNA lesions. A damage recognition complex composed of 2 UvrA and 2 UvrB subunits scans DNA for abnormalities. Upon binding of the UvrA(2)B(2) complex to a putative damaged site, the DNA wraps around one UvrB monomer. DNA wrap is dependent on ATP binding by UvrB and probably causes local melting of the DNA helix, facilitating insertion of UvrB beta-hairpin between the DNA strands. Then UvrB probes one DNA strand for the presence of a lesion. If a lesion is found the UvrA subunits dissociate and the UvrB-DNA preincision complex is formed. This complex is subsequently bound by UvrC and the second UvrB is released. If no lesion is found, the DNA wraps around the other UvrB subunit that will check the other stand for damage. The sequence is that of UvrABC system protein B from Bordetella avium (strain 197N).